The sequence spans 262 residues: Hemin import ATP-binding protein HmuV (262 aa).

One can recognise an ABC transporter domain in the interval 3–244 (LQARNLTLAR…DHMRRVYGIE (242 aa)). Residue 35–42 (GANGAGKS) coordinates ATP.

The protein belongs to the ABC transporter superfamily. Heme (hemin) importer (TC 3.A.1.14.5) family. As to quaternary structure, the complex is composed of two ATP-binding proteins (HmuV), two transmembrane proteins (HmuU) and a solute-binding protein (HmuT).

It localises to the cell inner membrane. Its function is as follows. Part of the ABC transporter complex HmuTUV involved in hemin import. Responsible for energy coupling to the transport system. The protein is Hemin import ATP-binding protein HmuV of Bordetella parapertussis (strain 12822 / ATCC BAA-587 / NCTC 13253).